A 679-amino-acid polypeptide reads, in one-letter code: Shutoff protein (679 aa).

The tract at residues 178-232 (LFDYLIGESQDPNDLDSEYKLAFTDEDLPQEGQAEKTKQRETLGAVATFGAVLLS) is binding to host EIF4G. One can recognise an RRM domain in the interval 235 to 353 (RLFTHPVVIK…ELAGANYAEA (119 aa)). Residues Tyr252 and Tyr564 each carry the phosphotyrosine; by host modification. A disordered region spans residues 552–679 (REKSILKRGG…SLQGTRRESS (128 aa)). Residues 661–679 (PRQETAEKESLQGTRRESS) are compositionally biased toward basic and acidic residues.

It belongs to the adenoviridae shutoff protein family. Monomer. Interacts with hexon protein; this interaction allows chaperoning and trimerization of hexon proteins. Interacts (via N-terminus) with host initiation factor EIF4G (via C-terminus). Interacts (via RRM domain) with viral mRNAs that contain the tripartite leader; this interaction allows ribosome shunting and expression of viral late mRNAs. Might be cleaved by the viral protease. Post-translationally, phosphorylated. Tyrosine phosphorylation enhances preferential binding to tripartite leader mRNAs and allows ribosome shunting. In terms of processing, methylated. Asymmetric dimethylation by host PRMT1 of the Arg/Gly-rich region may regulate shutoff protein binding to hexon and promote the capsid assembly in the nucleus.

The protein resides in the host cytoplasm. Protein that inhibits host translation while promoting late viral translation by ribosome shunting. Blocks host cap-dependent translation by binding to eIF4G, displacing MKNK1 from cap initiation complexes and preventing EIF4E phosphorylation. Binds to the tripartite leader sequence of viral late mRNAs and recruits host eIF4G, PABPC1/poly-A binding protein and 40S ribosomes subunits on viral mRNAs, allowing ribosome shunting and efficient translation of late viral mRNAs even though conventional translation via ribosome scanning from the cap has been shut off in the host cell. During assembly, acts as a chaperone protein that helps hexon proteins assembly into trimers. The polypeptide is Shutoff protein (Snake adenovirus serotype 1 (SnAdV-1)).